A 353-amino-acid chain; its full sequence is Ferredoxin--NADP reductase 1 (353 aa).

Positions 43, 51, 56, 96, 135, 300, and 341 each coordinate FAD.

It belongs to the ferredoxin--NADP reductase type 2 family. In terms of assembly, homodimer. It depends on FAD as a cofactor.

The enzyme catalyses 2 reduced [2Fe-2S]-[ferredoxin] + NADP(+) + H(+) = 2 oxidized [2Fe-2S]-[ferredoxin] + NADPH. The polypeptide is Ferredoxin--NADP reductase 1 (Cupriavidus metallidurans (strain ATCC 43123 / DSM 2839 / NBRC 102507 / CH34) (Ralstonia metallidurans)).